The chain runs to 239 residues: 2,3,4,5-tetrahydropyridine-2,6-dicarboxylate N-acetyltransferase (239 aa).

It belongs to the transferase hexapeptide repeat family. DapH subfamily.

It catalyses the reaction (S)-2,3,4,5-tetrahydrodipicolinate + acetyl-CoA + H2O = L-2-acetamido-6-oxoheptanedioate + CoA. It functions in the pathway amino-acid biosynthesis; L-lysine biosynthesis via DAP pathway; LL-2,6-diaminopimelate from (S)-tetrahydrodipicolinate (acetylase route): step 1/3. Functionally, catalyzes the transfer of an acetyl group from acetyl-CoA to tetrahydrodipicolinate. The chain is 2,3,4,5-tetrahydropyridine-2,6-dicarboxylate N-acetyltransferase from Staphylococcus aureus (strain MRSA252).